Reading from the N-terminus, the 350-residue chain is Phosphotriesterase-related protein (350 aa).

The a divalent metal cation site is built by His-22, His-24, Glu-169, His-201, His-230, and Asp-298.

The protein belongs to the metallo-dependent hydrolases superfamily. Phosphotriesterase family. A divalent metal cation is required as a cofactor.

This Drosophila willistoni (Fruit fly) protein is Phosphotriesterase-related protein.